A 306-amino-acid polypeptide reads, in one-letter code: Putative S-adenosyl-L-methionine-dependent methyltransferase MAP_4190c (306 aa).

S-adenosyl-L-methionine is bound by residues aspartate 129 and 158-159 (DL).

This sequence belongs to the UPF0677 family.

Exhibits S-adenosyl-L-methionine-dependent methyltransferase activity. The chain is Putative S-adenosyl-L-methionine-dependent methyltransferase MAP_4190c from Mycolicibacterium paratuberculosis (strain ATCC BAA-968 / K-10) (Mycobacterium paratuberculosis).